Here is a 227-residue protein sequence, read N- to C-terminus: Ribose-5-phosphate isomerase A (227 aa).

Substrate contacts are provided by residues Thr28 to Thr31, Asp81 to Asp84, and Lys94 to Gly97. The active-site Proton acceptor is Glu103. Lys121 serves as a coordination point for substrate.

The protein belongs to the ribose 5-phosphate isomerase family. In terms of assembly, homodimer.

The catalysed reaction is aldehydo-D-ribose 5-phosphate = D-ribulose 5-phosphate. The protein operates within carbohydrate degradation; pentose phosphate pathway; D-ribose 5-phosphate from D-ribulose 5-phosphate (non-oxidative stage): step 1/1. Its function is as follows. Catalyzes the reversible conversion of ribose-5-phosphate to ribulose 5-phosphate. The sequence is that of Ribose-5-phosphate isomerase A from Caulobacter vibrioides (strain ATCC 19089 / CIP 103742 / CB 15) (Caulobacter crescentus).